A 376-amino-acid chain; its full sequence is 26S proteasome non-ATPase regulatory subunit 13 (376 aa).

A PCI domain is found at 171–338 (SYYKDALRFL…KRVHMTWVQP (168 aa)). N6-acetyllysine is present on K298.

This sequence belongs to the proteasome subunit S11 family. Component of the 19S proteasome regulatory particle complex. The 26S proteasome consists of a 20S core particle (CP) and two 19S regulatory subunits (RP). The regulatory particle is made of a lid composed of 9 subunits including PSMD13, a base containing 6 ATPases and few additional components.

Its function is as follows. Component of the 26S proteasome, a multiprotein complex involved in the ATP-dependent degradation of ubiquitinated proteins. This complex plays a key role in the maintenance of protein homeostasis by removing misfolded or damaged proteins, which could impair cellular functions, and by removing proteins whose functions are no longer required. Therefore, the proteasome participates in numerous cellular processes, including cell cycle progression, apoptosis, or DNA damage repair. This Mus musculus (Mouse) protein is 26S proteasome non-ATPase regulatory subunit 13 (Psmd13).